Here is a 358-residue protein sequence, read N- to C-terminus: MEKTMFKSLSEIKQSYLELLKKIDDPEVISNIKEYSAINKEIAKIREISEKFITYENILKDVEQAKIMLESKNEEEVEFAKMIIDENSLKLDELEEKLKILILPQDENDDKNIIVEIRGAAGGDEANIFAGDLFRMYSKFADELGFRLKILSTNSASAGGFSQIVFSIKGEKAYSKFKFESGVHRVQRVPVTESQGRIHTSTTTVTVMPEIDDSVEIEIKPSDLKIDVFRSSGAGGQSVNTTDSAVRITHLPTNIVVTSQDERSQIANRETALTILKSKLYDLEMQKKAEEESGYRKLAGHGDRSEKIRTYNYPQDRVTDHRISFSTSLKPIMEGKLTPIIDALLAEEQNQKIKESGF.

Q237 bears the N5-methylglutamine mark. Over residues 291-309 the composition is skewed to basic and acidic residues; it reads EESGYRKLAGHGDRSEKIR. Residues 291–313 are disordered; the sequence is EESGYRKLAGHGDRSEKIRTYNY.

This sequence belongs to the prokaryotic/mitochondrial release factor family. Post-translationally, methylated by PrmC. Methylation increases the termination efficiency of RF1.

The protein localises to the cytoplasm. Peptide chain release factor 1 directs the termination of translation in response to the peptide chain termination codons UAG and UAA. This is Peptide chain release factor 1 from Mycoplasmopsis agalactiae (strain NCTC 10123 / CIP 59.7 / PG2) (Mycoplasma agalactiae).